We begin with the raw amino-acid sequence, 343 residues long: N6-succino-2-amino-2'-deoxyadenylate synthase (343 aa).

Ser-14 functions as the Proton acceptor in the catalytic mechanism. ATP is bound by residues Ser-14, Thr-15, Gly-16, Lys-17, and Gly-18. Ser-14 lines the dGMP pocket. A Mg(2+)-binding site is contributed by Ser-14. A dGMP-binding site is contributed by Asn-40. Positions 42, 43, and 44 each coordinate ATP. Position 42 (Gly-42) interacts with Mg(2+). DGMP-binding residues include Ser-127, Thr-128, and Arg-142. Residue Gln-187 participates in ATP binding. Thr-202 contacts dGMP. Thr-263 serves as a coordination point for Mg(2+). L-aspartate contacts are provided by Thr-263, Val-264, and Arg-269. ATP contacts are provided by Asn-294, Asn-297, and Gly-330.

This sequence belongs to the Caudovirales PurZ family. Requires Mg(2+) as cofactor.

The enzyme catalyses dGMP + L-aspartate + ATP = (2S)-2-amino-2'-deoxyadenylo-succinate + ADP + phosphate + 2 H(+). The protein operates within purine metabolism. In terms of biological role, involved in the synthesis of the atypical nucleotide dZTP (2-amino-2'-deoxyadenosine-5'-triphosphate). Catalyzes the condensation of aspartate with deoxyguanylate into dSMP (N6-succino-2-amino-2'-deoxyadenylate), which undergoes defumarylation and phosphorylation respectively by host PurB and guanylate/nucleoside diphosphate kinases to give dZTP. dZTP is integrated into the viral genome instead of adenine by the viral DNA polymerase. This Z-base probably completely replaces adenosine and forms a triple bond to the opposite T-base. The resulting non-standard viral DNA is called Z-genome. The chemically modified DNA is probably harder for the host bacteria to digest with nucleases or restriction enzymes. This Vibrio phage phiVC8 protein is N6-succino-2-amino-2'-deoxyadenylate synthase.